A 2147-amino-acid chain; its full sequence is MKIVRASRDQSAPVYGPRAGSQCMSNCFTFLHTCYLMGIDPVLDTTSLDAVLDSGARLDAIADEKVKRQALTDHPYRLGTEIPTVIETPAGITGHALSRPFNGTAETQDLGGYKCLGILDFLTYARGKPLPVYIIVTVGVHTRGVIVARGATYVFDPHTTDLSAEAAVYVCDDFTEAISALSFFGAMIGDFYYDAVLVYFTRCRTTLISPSELLVQIMDQYKDPDIDASVMSGSGGGGPSISSSAASASASVSPLPSGAASDGVTNGAGAQTSSKSGKKRRAPDVPPQQKGTAKTLRRSRRPIRLPERLSEVIVEDVQTIEHFRTATQSLPVKPPQEWTMYCGEEPFYRQYFVDVGRQLLAHAIDTYVSLDKTTDESAVQRFESLMGLSDELDAVIAAARATELSAPPLYKTYLSQRVSASAVTRTDRLLASKILALFEEGSATDFETVSSWLRELLQQLPVENTTTTEAKIAAFVAQHPIPGERAFVCLRNSQVKSLGELLSVKRETLKVKYMENDATYRKILDAISKLGLASNAAAAIQSADTSHLDSEQLASLAQAAEAYAQSAYESCQAKMTELLSTNHNRILTGSLPDSDIAAVLAAFKAVSENVRALREVELLKSQVHVQLAQLTEDLLYLQTAEVKLEVTPSAEIKKLRAEYETARKQISDEEMRIKELIENMEDMITDSSSSPPPPEMLDMLRTQIEEVESMTVDEQDARRADKVLGKLSTLDEAEAKATEFAQSLSTVNIPSLNEIKGVKMLKSVLETNADLRRAYVQAVTGMLENALKQLAEGNLPSDDMMSRITALAEQLPTGRQVRADLLDSTDIVSQMSRRLRYAANQKNSTQSLEDVLNFFSENDDMIRKLLKTSWGKPVATVYRRVQVEYDRKMEELRESEWLKRVKETDIDSPQTLERLLKTAPNETILAKHAPDMHARLKKRMQSEAEKRTADMKRLYEEMRKKVDTDLKVVSDSFSSQTPSMFSSIDLKSCGTSLVRLTKEDRKAAIATFNANLTKSLNSLLASLVTVETATIAAILKGADPEATSSTGSAGGGADRQKHTSTLENNISTLLGWQQKVLLPETERDLLTIAHLLTALTHMRKNWRNPAAAFSSTPHTAAYRNFAELANEIESRRTETLARYKSKYAELNASIHDNTKANDVTIKPEDTFTAAFRDTVKAMAAPFSTELQARLQARENELKDELSDLNVKLKTKLERYLAKRSSQDARWRDLITQHRIRLPEGLDVDTNRLRTDTVVTLNGIIRSAATTLPYITAKRGLEWTTEFILAAIEEKKDADPGMFAQLATLLDNSQAIARKIEEKIVYNTKVEAEMLETAPEHTRESLSNLQLMLGQLEAKRVVGGEARYKILSDAILTKQNKLAFAEDLEKLSARYFELARDIRSSKYGLDFDAQLLKTSLLKSEIGQHKKDPPSTGEEVGLPEESTTAAKISISSLLLGIAALEKYIVAHRTLLDNFVSSQPLISQAENIPALVGGPGEDDKPGQEPFDWTRIDLSRLSACDVSTALYRGTDVFGERRVMTARGIQLYLYATHGNFVFEAFSHVRGTKGLLSSSSGGGNGSGASSRQKDQQNATVTRRYRSVTVLASIAATLQTFWSEISRYDIRELLVESGRDPESAADQRDRRLNTVMNLKLFVYVMTVAWSEATPPVEPGSPEATHALEVSLLDFSTLMAALHPEYVYAITTQPVDATLRGLIARLDRRTVDAAMNTQENPPPYDMRELKAFCLDTKQWTQEDIRPQMWMSDLVKQICTSHPRNRDASTSTKLFLYMLATKVLPRDILRCLWVQFRPAYASSIASLEELVSALCDSFFKIYGTTSETVSARLKTGEKVERQVVLRHKPTMSLLDEFSQQEAVLDYILGSYVFAIPMTVGIHVTNIVNGRYRLIVRHLENLPSDPDFVKVVRSRDLSFDRFGWSYTVQNPVERSWFSLQEDRLRHLLTNPPQQDRTPLVVYDSNTNYAVNAMMPPLKAPPATSRVHLTVKNPFSTMRMIPHEDEGDDAATSETPFTSLPINIDFLRRDPPRLKRASGDSSSSVPAEDRDPDARPQDSVPDQSLSEPLFSQTKVSSIVPKDAVTTLSNESISQTFQIHPFRALSSAIMAAIEILQETRLQLDTFESDMCEAIRRIKILYLH.

Positions 1–233 are deubiquitination activity; the sequence is MKIVRASRDQ…PDIDASVMSG (233 aa). The Peptidase C76 domain maps to 3–223; that stretch reads IVRASRDQSA…LVQIMDQYKD (221 aa). Active-site residues include C23, D156, and H158. Disordered regions lie at residues 228–301, 1419–1438, 1567–1589, and 2034–2072; these read ASVM…RSRR, EIGQ…GLPE, SSSS…QNAT, and RDPP…SLSE. The span at 240–261 shows a compositional bias: low complexity; sequence SISSSAASASASVSPLPSGAAS. A region of interest (interaction with inner tegument protein) is located at residue T292. The span at 2052–2061 shows a compositional bias: basic and acidic residues; it reads AEDRDPDARP.

Belongs to the herpesviridae large tegument protein family. As to quaternary structure, interacts with host CUL1 and CUL4A; these interactions inhibit the E3 ligase activity of cullins. Interacts with inner tegument protein. Interacts with capsid vertex specific component CVC2. Interacts with the major capsid protein/MCP.

It localises to the virion tegument. Its subcellular location is the host cytoplasm. It is found in the host nucleus. It carries out the reaction Thiol-dependent hydrolysis of ester, thioester, amide, peptide and isopeptide bonds formed by the C-terminal Gly of ubiquitin (a 76-residue protein attached to proteins as an intracellular targeting signal).. Its function is as follows. Large tegument protein that plays multiple roles in the viral cycle. During viral entry, remains associated with the capsid while most of the tegument is detached and participates in the capsid transport toward the host nucleus. Plays a role in the routing of the capsid at the nuclear pore complex and subsequent uncoating. Within the host nucleus, acts as a deneddylase and promotes the degradation of nuclear CRLs (cullin-RING ubiquitin ligases) and thereby stabilizes nuclear CRL substrates, while cytoplasmic CRLs remain unaffected. These modifications prevent host cell cycle S-phase progression and create a favorable environment allowing efficient viral genome replication. Participates later in the secondary envelopment of capsids. Indeed, plays a linker role for the association of the outer viral tegument to the capsids together with the inner tegument protein. The sequence is that of Large tegument protein deneddylase (M48) from Mus musculus (Mouse).